The primary structure comprises 179 residues: Adenine phosphoribosyltransferase (179 aa).

It belongs to the purine/pyrimidine phosphoribosyltransferase family. As to quaternary structure, homodimer.

The protein localises to the cytoplasm. The enzyme catalyses AMP + diphosphate = 5-phospho-alpha-D-ribose 1-diphosphate + adenine. It functions in the pathway purine metabolism; AMP biosynthesis via salvage pathway; AMP from adenine: step 1/1. Its function is as follows. Catalyzes a salvage reaction resulting in the formation of AMP, that is energically less costly than de novo synthesis. The chain is Adenine phosphoribosyltransferase from Jannaschia sp. (strain CCS1).